Reading from the N-terminus, the 771-residue chain is Endoplasmin homolog (771 aa).

The signal sequence occupies residues 1–24 (MANSSLLRVVLVALLLLGSVTVSA). ATP-binding residues include Asn63, Asp109, and Phe160. Asn63 carries an N-linked (GlcNAc...) asparagine glycan. The interval 254–282 (AATPESAAEERSLDEGAVEEDPDKEGDTQ) is disordered. 2 N-linked (GlcNAc...) asparagine glycosylation sites follow: Asn306 and Asn402. A disordered region spans residues 727–771 (ADDSLLPPDDAEYTVSDTETEEEEEQPKVDTNAHEEAETDGEGDL). Basic and acidic residues predominate over residues 752–762 (QPKVDTNAHEE). The short motif at 768 to 771 (EGDL) is the Prevents secretion from ER element.

Belongs to the heat shock protein 90 family. Homotetramer.

The protein resides in the endoplasmic reticulum. In terms of biological role, molecular chaperone that functions in the processing and transport of secreted proteins. Required for the synthesis of lipophosphoglycan (LPG), a cell surface glycoconjugate. Necessary for the attachment of the galactosyl residue to the mannose within the phosphoglycan repeats of the nascent LPG chain. Also required for addition of phosphoglycan to acid phosphatase. Not required for normal growth. Has ATPase activity. Binds heparin with micromolar affinity which may facilitate infection of host cells. This is Endoplasmin homolog from Leishmania donovani.